We begin with the raw amino-acid sequence, 316 residues long: Aspartate carbamoyltransferase catalytic subunit (316 aa).

Positions 59 and 60 each coordinate carbamoyl phosphate. K88 is a binding site for L-aspartate. Carbamoyl phosphate-binding residues include R109, H137, and Q140. Residues R170 and R232 each coordinate L-aspartate. Residues L269 and P270 each contribute to the carbamoyl phosphate site.

It belongs to the aspartate/ornithine carbamoyltransferase superfamily. ATCase family. In terms of assembly, heterooligomer of catalytic and regulatory chains.

It catalyses the reaction carbamoyl phosphate + L-aspartate = N-carbamoyl-L-aspartate + phosphate + H(+). It participates in pyrimidine metabolism; UMP biosynthesis via de novo pathway; (S)-dihydroorotate from bicarbonate: step 2/3. Its function is as follows. Catalyzes the condensation of carbamoyl phosphate and aspartate to form carbamoyl aspartate and inorganic phosphate, the committed step in the de novo pyrimidine nucleotide biosynthesis pathway. This Methanobrevibacter smithii (strain ATCC 35061 / DSM 861 / OCM 144 / PS) protein is Aspartate carbamoyltransferase catalytic subunit.